The following is a 192-amino-acid chain: Secreted phosphoprotein 24 (192 aa).

The N-terminal stretch at 1 to 29 (MGKTPEDFERHTMRSLIFVLALSVFTCSG) is a signal peptide. 2 disulfides stabilise this stretch: Cys92/Cys103 and Cys116/Cys134. The tract at residues 155–192 (TDPRKRGSSRSEAFSSRGRGHSNGDWRKPDYTSPGKVE) is disordered.

The protein belongs to the SPP2 family. Multiply phosphorylated at serine residues.

Its subcellular location is the secreted. Its function is as follows. Could coordinate an aspect of bone turnover. This is Secreted phosphoprotein 24 (SPP2) from Gallus gallus (Chicken).